A 233-amino-acid chain; its full sequence is 2,3,4,5-tetrahydropyridine-2,6-dicarboxylate N-acetyltransferase (233 aa).

The protein belongs to the transferase hexapeptide repeat family. DapH subfamily.

The enzyme catalyses (S)-2,3,4,5-tetrahydrodipicolinate + acetyl-CoA + H2O = L-2-acetamido-6-oxoheptanedioate + CoA. Its pathway is amino-acid biosynthesis; L-lysine biosynthesis via DAP pathway; LL-2,6-diaminopimelate from (S)-tetrahydrodipicolinate (acetylase route): step 1/3. Catalyzes the transfer of an acetyl group from acetyl-CoA to tetrahydrodipicolinate. This chain is 2,3,4,5-tetrahydropyridine-2,6-dicarboxylate N-acetyltransferase, found in Enterococcus faecalis (strain ATCC 700802 / V583).